The primary structure comprises 737 residues: Translation initiation factor IF-2 (737 aa).

The span at 69–80 shows a compositional bias: basic and acidic residues; sequence EKKEEKPIRKIM. The segment at 69–130 is disordered; it reads EKKEEKPIRK…HKNKGKKKKG (62 aa). Composition is skewed to basic residues over residues 95-108 and 121-130; these read NNKKAKFQQTKNKK and HKNKGKKKKG. A tr-type G domain is found at 237-404; the sequence is ERPPVITIMG…TILITAEILE (168 aa). A G1 region spans residues 246-253; sequence GHVDHGKT. 246–253 serves as a coordination point for GTP; that stretch reads GHVDHGKT. The tract at residues 271 to 275 is G2; that stretch reads GITQK. Positions 292–295 are G3; it reads DTPG. GTP contacts are provided by residues 292 to 296 and 346 to 349; these read DTPGH and NKID. The segment at 346–349 is G4; that stretch reads NKID. The interval 382–384 is G5; it reads SAK.

This sequence belongs to the TRAFAC class translation factor GTPase superfamily. Classic translation factor GTPase family. IF-2 subfamily.

Its subcellular location is the cytoplasm. One of the essential components for the initiation of protein synthesis. Protects formylmethionyl-tRNA from spontaneous hydrolysis and promotes its binding to the 30S ribosomal subunits. Also involved in the hydrolysis of GTP during the formation of the 70S ribosomal complex. This chain is Translation initiation factor IF-2, found in Fusobacterium nucleatum subsp. nucleatum (strain ATCC 25586 / DSM 15643 / BCRC 10681 / CIP 101130 / JCM 8532 / KCTC 2640 / LMG 13131 / VPI 4355).